We begin with the raw amino-acid sequence, 119 residues long: Large ribosomal subunit protein uL18 (119 aa).

Belongs to the universal ribosomal protein uL18 family. In terms of assembly, part of the 50S ribosomal subunit; part of the 5S rRNA/L5/L18/L25 subcomplex. Contacts the 5S and 23S rRNAs.

In terms of biological role, this is one of the proteins that bind and probably mediate the attachment of the 5S RNA into the large ribosomal subunit, where it forms part of the central protuberance. The chain is Large ribosomal subunit protein uL18 from Cupriavidus taiwanensis (strain DSM 17343 / BCRC 17206 / CCUG 44338 / CIP 107171 / LMG 19424 / R1) (Ralstonia taiwanensis (strain LMG 19424)).